Here is a 200-residue protein sequence, read N- to C-terminus: dITP/XTP pyrophosphatase (200 aa).

8–13 (SQNSSK) lines the substrate pocket. Residues Glu40 and Asp69 each coordinate Mg(2+). Asp69 (proton acceptor) is an active-site residue. Residues Ser70, 154-157 (FGYD), Lys177, and 182-183 (HR) each bind substrate.

The protein belongs to the HAM1 NTPase family. As to quaternary structure, homodimer. It depends on Mg(2+) as a cofactor.

The enzyme catalyses XTP + H2O = XMP + diphosphate + H(+). The catalysed reaction is dITP + H2O = dIMP + diphosphate + H(+). It catalyses the reaction ITP + H2O = IMP + diphosphate + H(+). In terms of biological role, pyrophosphatase that catalyzes the hydrolysis of nucleoside triphosphates to their monophosphate derivatives, with a high preference for the non-canonical purine nucleotides XTP (xanthosine triphosphate), dITP (deoxyinosine triphosphate) and ITP. Seems to function as a house-cleaning enzyme that removes non-canonical purine nucleotides from the nucleotide pool, thus preventing their incorporation into DNA/RNA and avoiding chromosomal lesions. This is dITP/XTP pyrophosphatase from Coxiella burnetii (strain RSA 493 / Nine Mile phase I).